The following is a 294-amino-acid chain: Protein C3orf33 (294 aa).

The residue at position 2 (Ala-2) is an N-acetylalanine. A helical transmembrane segment spans residues 40-56; the sequence is ISTGMAIAGIMLLLRSI.

As to expression, highly expressed in ileocecal tissue and endometrium.

The protein localises to the membrane. Its subcellular location is the secreted. In terms of biological role, secreted protein may play a role in transcription regulation via the MAPK3/MAPK1 pathway through an unidentified receptor on the plasma membrane. The sequence is that of Protein C3orf33 (C3orf33) from Homo sapiens (Human).